The sequence spans 446 residues: Tubulin beta-5 chain (446 aa).

The short motif at 1–4 (MREI) is the MREI motif element. 8 residues coordinate GTP: glutamine 11, glutamate 69, serine 138, glycine 142, threonine 143, glycine 144, asparagine 204, and asparagine 226. Glutamate 69 provides a ligand contact to Mg(2+). Residue glutamate 438 is modified to 5-glutamyl polyglutamate.

This sequence belongs to the tubulin family. In terms of assembly, dimer of alpha and beta chains. A typical microtubule is a hollow water-filled tube with an outer diameter of 25 nm and an inner diameter of 15 nM. Alpha-beta heterodimers associate head-to-tail to form protofilaments running lengthwise along the microtubule wall with the beta-tubulin subunit facing the microtubule plus end conferring a structural polarity. Microtubules usually have 13 protofilaments but different protofilament numbers can be found in some organisms and specialized cells. Mg(2+) is required as a cofactor. Some glutamate residues at the C-terminus are polyglycylated, resulting in polyglycine chains on the gamma-carboxyl group. Glycylation is mainly limited to tubulin incorporated into axonemes (cilia and flagella) whereas glutamylation is prevalent in neuronal cells, centrioles, axonemes, and the mitotic spindle. Both modifications can coexist on the same protein on adjacent residues, and lowering polyglycylation levels increases polyglutamylation, and reciprocally. The precise function of polyglycylation is still unclear. Post-translationally, some glutamate residues at the C-terminus are polyglutamylated, resulting in polyglutamate chains on the gamma-carboxyl group. Polyglutamylation plays a key role in microtubule severing by spastin (SPAST). SPAST preferentially recognizes and acts on microtubules decorated with short polyglutamate tails: severing activity by SPAST increases as the number of glutamates per tubulin rises from one to eight, but decreases beyond this glutamylation threshold.

It localises to the cytoplasm. The protein localises to the cytoskeleton. Tubulin is the major constituent of microtubules, a cylinder consisting of laterally associated linear protofilaments composed of alpha- and beta-tubulin heterodimers. Microtubules grow by the addition of GTP-tubulin dimers to the microtubule end, where a stabilizing cap forms. Below the cap, tubulin dimers are in GDP-bound state, owing to GTPase activity of alpha-tubulin. This is Tubulin beta-5 chain from Gallus gallus (Chicken).